The primary structure comprises 79 residues: Small ribosomal subunit protein uS11 (79 aa).

Position 14 is a phosphoserine (S14). Residues K59 and K61 each participate in a glycyl lysine isopeptide (Lys-Gly) (interchain with G-Cter in SUMO2) cross-link.

Belongs to the universal ribosomal protein uS11 family. In terms of assembly, component of the small ribosomal subunit. Part of the small subunit (SSU) processome, composed of more than 70 proteins and the RNA chaperone small nucleolar RNA (snoRNA) U3.

It is found in the cytoplasm. It localises to the nucleus. Its subcellular location is the nucleolus. Functionally, component of the small ribosomal subunit. The ribosome is a large ribonucleoprotein complex responsible for the synthesis of proteins in the cell. Part of the small subunit (SSU) processome, first precursor of the small eukaryotic ribosomal subunit. During the assembly of the SSU processome in the nucleolus, many ribosome biogenesis factors, an RNA chaperone and ribosomal proteins associate with the nascent pre-rRNA and work in concert to generate RNA folding, modifications, rearrangements and cleavage as well as targeted degradation of pre-ribosomal RNA by the RNA exosome. The sequence is that of Small ribosomal subunit protein uS11 (RPS14) from Sus scrofa (Pig).